The primary structure comprises 206 residues: HTH-type transcriptional regulator BetI (206 aa).

Positions 8-68 (PLRRKALVDA…ETIRSLLRDL (61 aa)) constitute an HTH tetR-type domain. The segment at residues 31-50 (TMSDIAREAGVSAALAHHYF) is a DNA-binding region (H-T-H motif).

The protein operates within amine and polyamine biosynthesis; betaine biosynthesis via choline pathway [regulation]. Repressor involved in the biosynthesis of the osmoprotectant glycine betaine. It represses transcription of the choline transporter BetT and the genes of BetAB involved in the synthesis of glycine betaine. The polypeptide is HTH-type transcriptional regulator BetI (Agrobacterium fabrum (strain C58 / ATCC 33970) (Agrobacterium tumefaciens (strain C58))).